We begin with the raw amino-acid sequence, 299 residues long: Ribosomal RNA small subunit methyltransferase H 1 (299 aa).

S-adenosyl-L-methionine contacts are provided by residues 31–33, Asp-50, Phe-76, Asp-97, and Gln-104; that span reads GGH.

This sequence belongs to the methyltransferase superfamily. RsmH family.

Its subcellular location is the cytoplasm. It carries out the reaction cytidine(1402) in 16S rRNA + S-adenosyl-L-methionine = N(4)-methylcytidine(1402) in 16S rRNA + S-adenosyl-L-homocysteine + H(+). Specifically methylates the N4 position of cytidine in position 1402 (C1402) of 16S rRNA. This Acholeplasma laidlawii (strain PG-8A) protein is Ribosomal RNA small subunit methyltransferase H 1.